The sequence spans 117 residues: Large-conductance mechanosensitive channel (117 aa).

3 consecutive transmembrane segments (helical) span residues 7-27 (EFAL…GAAF), 30-50 (IVTS…FGSV), and 64-84 (GLFI…FIFV).

The protein belongs to the MscL family. Homopentamer.

It localises to the cell membrane. Functionally, channel that opens in response to stretch forces in the membrane lipid bilayer. May participate in the regulation of osmotic pressure changes within the cell. In Staphylococcus haemolyticus (strain JCSC1435), this protein is Large-conductance mechanosensitive channel.